Here is a 286-residue protein sequence, read N- to C-terminus: Beta-lactamase TEM-12 (286 aa).

A signal peptide spans 1-23 (MSIQHFRVALIPFFAAFCLPVFA). Residue Ser-68 is the Acyl-ester intermediate of the active site. A disulfide bridge connects residues Cys-75 and Cys-121. Residue Glu-166 is the Proton acceptor of the active site. 232–234 (KSG) provides a ligand contact to substrate.

It belongs to the class-A beta-lactamase family.

The enzyme catalyses a beta-lactam + H2O = a substituted beta-amino acid. Its function is as follows. TEM-type are the most prevalent beta-lactamases in enterobacteria; they hydrolyze the beta-lactam bond in susceptible beta-lactam antibiotics, thus conferring resistance to penicillins and cephalosporins such as ceftazidime. This is Beta-lactamase TEM-12 (blaT-12b) from Klebsiella oxytoca.